The sequence spans 68 residues: Alpha-conotoxin-like Lt1.2 (68 aa).

The first 21 residues, 1 to 21 (MGMRMMFIMFMLVVLATTVDT), serve as a signal peptide directing secretion. The propeptide occupies 22–48 (FTSDRALDAMNAAASNKASRLIALAVR). 2 disulfide bridges follow: Cys-50-Cys-56 and Cys-51-Cys-64. The segment at 52–54 (ARA) is lacks the Ser-Xaa-Pro motif that is crucial for potent interaction with nAChR. Glycine amide is present on Gly-65.

It belongs to the conotoxin A superfamily. Expressed by the venom duct.

The protein resides in the secreted. Functionally, alpha-conotoxins act on postsynaptic membranes, they bind to the nicotinic acetylcholine receptors (nAChR) and thus inhibit them. Has a distinct nAChR binding mode from other alpha-conotoxins, due to a different three residue motif (Ala-Xaa-Ala instead of the conserved Ser-Xaa-Pro motif). The chain is Alpha-conotoxin-like Lt1.2 from Conus litteratus (Lettered cone).